The primary structure comprises 435 residues: GTPase Der (435 aa).

EngA-type G domains lie at 4–167 (PVVA…PAEK) and 175–350 (ISFS…DNQN). Residues 10 to 17 (GQPNVGKS), 57 to 61 (DTGGI), 119 to 122 (NKAD), 181 to 188 (GRPNVGKS), 228 to 232 (DTAGI), and 293 to 296 (NKWD) each bind GTP. One can recognise a KH-like domain in the interval 351–435 (QRIQSSVLND…PIKILPRKRK (85 aa)).

Belongs to the TRAFAC class TrmE-Era-EngA-EngB-Septin-like GTPase superfamily. EngA (Der) GTPase family. Associates with the 50S ribosomal subunit.

GTPase that plays an essential role in the late steps of ribosome biogenesis. This chain is GTPase Der, found in Lactobacillus acidophilus (strain ATCC 700396 / NCK56 / N2 / NCFM).